Here is a 1836-residue protein sequence, read N- to C-terminus: MINKNKVTERSGIHDTVKSLSENLRKYIEAQYHIRDEGLIAERRALLQQNETIAQAPYIEATPIYEPGAPYSELPIPEAASNVLTQLSELGIGLYQRPYKHQSQALESFLGEDASDLVIATGTGSGKTESFLMPIIGKLAIESSERPKSASLPGCRAILLYPMNALVNDQLARIRRLFGDSEASKILRSGRCAPVRFGAYTGRTPYPGRRSSRRDELFIKPLFDEFYNKLANNAPVRAELNRIGRWPSKDLDAFYGQSASQAKTYVSGKKTGKQFVLNNWGERLITQPEDRELMTRHEMQNRCPELLITNYSMLEYMLMRPIERNIFEQTKEWLKADEMNELILVLDEAHMYRGAGGAEVALLIRRLCARLDIPRERMRCILTSASLGSIEDGERFAQDLTGLSPTSSRKFRIIEGTRESRPESQIVTSKEANALAEFDLNSFQCVAEDLESAYAAIESLAERMGWQKPMIKDHSTLRNWLFDNLTGFGPIETLIEIVSGKAVKLNILSENLFPDSPQQIAERATDALLALGCYAQRASDGRVLIPTRMHLFYRGLPGLYACIDPDCNQRLGNHSGPTILGRLYTKPLDQCKCASKGRVYELFTHRDCGAAFIRGYVSSEMDFVWHQPNGPLSEDEDIDLVPIDILVEETPHVHSDYQDRWLHIATGRLSKQCQDEDSGYRKVFIPDRVKSGSEITFDECPVCMRKTRSAQNEPSKIMDHVTKGEAPFTTLVRTQISHQPASRPIDGKHPNGGKKVLIFSDGRQKAARLARDIPRDIELDLFRQSIALACSKLKDINREPKPTSVLYLAFLSVLSEHDLLIFDGEDSRKVVMARDEFYRDYNSDLAQAFDDNFSPQESPSRYKIALLKLLCSNYYSLSGTTVGFVEPSQLKSKKMWEDVQSKKLNIESKDVHALAVAWIDTLLTEFAFDESIDSTLRIKAAGFYKPTWGSQGRFGKALRKTLIQHPAMGELYVEVLEEIFRTHLTLGKDGVYFLAPNALRLKIDLLHVWKQCNDCTALMPFALEHSTCLACGSNSVKTVEPSESSYINARKGFWRSPVEEVLVSNSRLLNLSVEEHTAQLSHRDRASVHATTELYELRFQDVLINDNDKPIDVLSCTTTMEVGVDIGSLVAVALRNVPPQRENYQQRAGRAGRRGASVSTVVTYSQNGPHDSYYFLNPERIVAGSPRTPEVKVNNPKIARRHVHSFLVQTFFHELMEQGIYNPTEKTAILEKALGTTRDFFHGAKDTGLNLDSFNNWVKNRILSTNGDLRTSVAAWLPPVLETGGLSASDWFAKVAEEFLNTLHGLAEIVPQIAALVDEENEDDEQTSGGMKFAQEELLEFLFYHGLLPSYAFPTSLCSFLVEKIVKNIRGSFEVRTVQQPQQSISQALSEYAPGRLIVIDRKTYRSGGVFSNALKGELNRARKLFNNPKKFIHCDKCSFVRDPHNNQNSENTCPICGGILKVEIMIQPEVFGPENAKELNEDDREQEITYVTAAQYPQPVDPEDFKFNNGGAHIVFTHAIDQKLVTVNRGKNEGGSSGFSVCCECGAASVYDSYSPAKGAHERPYKYIATKETPRLCSGEYKRVFLGHDFRTDLLLLRITVGSPLVTDTSNAIVLRMYEDALYTIAEALRLAASRHKQLDLDPAEFGSGFRILPTIEEDTQALDLFLYDTLSGGAGYAEVAAANLDDILTATLALLEGCECDTSCTDCLNHFHNQHIQSRLDRKLGASLLRYALYGMVPRCASPDIQVEKLSQLRASLELDGFQCLIKGTQEAPMIVSLNDRSVAVGSYPGLIDRPDFQHDVYKSKNTNAHIAFNEYLLRSNLPQAHQNIRKLLR.

Residues Ser-108–Pro-405 form the Helicase ATP-binding domain. Thr-121 to Thr-128 contacts ATP. Residues Asp-347–His-350 carry the DEAH box motif. The Helicase C-terminal domain maps to Asp-1014–Ala-1199.

The protein localises to the cytoplasm. Functionally, component of antiviral defense system Druantia type I, composed of DruA, DruB, DruC, DruD and DruE. Expression of Druantia in E.coli (strain MG1655) confers resistance to phage lambda, SECphi18, SECphi27 and T4. This protein is probably a helicase. This chain is Druantia protein DruE, found in Escherichia coli (strain UMEA 4076-1).